A 351-amino-acid chain; its full sequence is Formyl peptide receptor-related sequence 1 (351 aa).

At 1-27 (METNYSIPLNGSDVVIYDSTISRVLWI) the chain is on the extracellular side. N-linked (GlcNAc...) asparagine glycans are attached at residues Asn-4 and Asn-10. A helical transmembrane segment spans residues 28 to 50 (LSMVVVSITFFLGVLGNGLVIWV). Residues 51–61 (AGFRMPHTVTT) lie on the Cytoplasmic side of the membrane. A helical transmembrane segment spans residues 62 to 83 (IWYLNLALADFSFTATLPFLLV). At 84-100 (EMAMKEKWPFGWFLCKL) the chain is on the extracellular side. Cys-98 and Cys-176 are disulfide-bonded. A helical membrane pass occupies residues 101 to 121 (VHIAVDVNLFGSVFLIAVIAL). At 122–140 (DRCICVLHPVWAQNHRTVS) the chain is on the cytoplasmic side. The helical transmembrane segment at 141 to 162 (LARNVVVGSWIFALILTLPLFL) threads the bilayer. Residues 163-205 (FLTTVRDARGDVHCRLSFVSWGNSVEERLNTAITFVTTRGIIR) are Extracellular-facing. The helical transmembrane segment at 206 to 226 (FIVSFSLPMSFVAICYGLITT) threads the bilayer. The Cytoplasmic portion of the chain corresponds to 227-242 (KIHKKAFVNSSRPFRV). A helical transmembrane segment spans residues 243 to 266 (LTGVVASFFICWFPFQLVALLGTV). The Extracellular portion of the chain corresponds to 267–286 (WLKEMQFSGSYKIIGRLVNP). The helical transmembrane segment at 287-306 (TSSLAFFNSCLNPILYVFMG) threads the bilayer. The Cytoplasmic portion of the chain corresponds to 307 to 351 (QDFQERLIHSLSSRLQRALSEDSGHISDTRTNLASLPEDIEIKAI).

Belongs to the G-protein coupled receptor 1 family. As to expression, expressed exclusively in vomeronasal neurons. Expressed in 0.6 % of a subset of sensory neurons located in the basal layer of the vomeronasal organ. Each neuron appears to express only one receptor gene. Expressed mostly in neutrophils, followed by spleen and lung and expressed at very low levels in heart and liver.

The protein localises to the cell membrane. Functionally, low affinity receptor for N-formyl-methionyl peptides. Receptor for lipoxin A4. May have an olfactory function associated with the identification of pathogens or of pathogenic states. The protein is Formyl peptide receptor-related sequence 1 (Fpr-s1) of Mus musculus (Mouse).